The sequence spans 403 residues: Argininosuccinate synthase (403 aa).

ATP contacts are provided by residues 13 to 21 and A40; that span reads AYSGGLDTS. L-citrulline-binding residues include Y92 and S97. G122 lines the ATP pocket. L-aspartate contacts are provided by T124, N128, and D129. N128 provides a ligand contact to L-citrulline. L-citrulline contacts are provided by R132, S181, S190, E266, and Y278.

The protein belongs to the argininosuccinate synthase family. Type 1 subfamily. As to quaternary structure, homotetramer.

The protein localises to the cytoplasm. It catalyses the reaction L-citrulline + L-aspartate + ATP = 2-(N(omega)-L-arginino)succinate + AMP + diphosphate + H(+). The protein operates within amino-acid biosynthesis; L-arginine biosynthesis; L-arginine from L-ornithine and carbamoyl phosphate: step 2/3. The protein is Argininosuccinate synthase of Aliivibrio fischeri (strain ATCC 700601 / ES114) (Vibrio fischeri).